The following is a 737-amino-acid chain: Catalase-peroxidase (737 aa).

A cross-link (tryptophyl-tyrosyl-methioninium (Trp-Tyr) (with M-251)) is located at residues 102–225 (WHSAGTYRTG…LGAVQMGLIY (124 aa)). Residue His103 is the Proton acceptor of the active site. Positions 225–251 (YVNPEGPNGKPDPLAAAHDIRETFARM) form a cross-link, tryptophyl-tyrosyl-methioninium (Tyr-Met) (with W-102). Residue His266 coordinates heme b.

It belongs to the peroxidase family. Peroxidase/catalase subfamily. As to quaternary structure, homodimer or homotetramer. Heme b serves as cofactor. In terms of processing, formation of the three residue Trp-Tyr-Met cross-link is important for the catalase, but not the peroxidase activity of the enzyme.

It carries out the reaction H2O2 + AH2 = A + 2 H2O. The catalysed reaction is 2 H2O2 = O2 + 2 H2O. Its function is as follows. Bifunctional enzyme with both catalase and broad-spectrum peroxidase activity. This is Catalase-peroxidase from Caulobacter sp. (strain K31).